The chain runs to 600 residues: Pescadillo homolog (600 aa).

The BRCT domain maps to Pro351–Pro450. Positions Leu454 to Asn600 are disordered. Acidic residues predominate over residues Gln478–Leu509. A coiled-coil region spans residues Gln478–Asn600. Residues Lys530–Lys539 are compositionally biased toward basic residues. Basic and acidic residues-rich tracts occupy residues Ile569–Thr580 and Lys588–Asn600.

The protein belongs to the pescadillo family. As to quaternary structure, component of the NOP7 complex, composed of ERB1, NOP7 and YTM1. The complex is held together by ERB1, which interacts with NOP7 via its N-terminal domain and with YTM1 via a high-affinity interaction between the seven-bladed beta-propeller domains of the 2 proteins. The NOP7 complex associates with the 66S pre-ribosome.

The protein resides in the nucleus. It is found in the nucleolus. Its subcellular location is the nucleoplasm. Functionally, component of the NOP7 complex, which is required for maturation of the 25S and 5.8S ribosomal RNAs and formation of the 60S ribosome. The protein is Pescadillo homolog of Debaryomyces hansenii (strain ATCC 36239 / CBS 767 / BCRC 21394 / JCM 1990 / NBRC 0083 / IGC 2968) (Yeast).